We begin with the raw amino-acid sequence, 822 residues long: SKI/DACH domain-containing protein 1 (822 aa).

Over residues 245–261 the composition is skewed to basic residues; that stretch reads HHHHHHHHHHHHHHHRA. The tract at residues 245–370 is disordered; it reads HHHHHHHHHH…SSSGSSQVSV (126 aa). Residues 278 to 318 are compositionally biased toward low complexity; sequence PHLGSFPESCSSDSESSSYSDHAANDSDFGSSLSSSSNSVS. Residues 319-338 show a composition bias toward acidic residues; it reads SEEEEEEGEEEEEEEEEEEG. A Glycyl lysine isopeptide (Lys-Gly) (interchain with G-Cter in SUMO2) cross-link involves residue Lys-602. 2 disordered regions span residues 658 to 677 and 706 to 732; these read ETPS…TLGS and LQTP…THEG. The span at 660-675 shows a compositional bias: polar residues; it reads PSLNPLAQSQGLSCTL.

This sequence belongs to the DACH/dachshund family.

This Mus musculus (Mouse) protein is SKI/DACH domain-containing protein 1 (Skida1).